A 256-amino-acid chain; its full sequence is Probable elongation factor 1-delta (256 aa).

Residues Ser-37, Ser-53, and Ser-89 each carry the phosphoserine modification. A disordered region spans residues 110–146 (NGVSKEPEVEAKKPEANDDDDDVDLFGSDSEEEDGEA). Over residues 114 to 125 (KEPEVEAKKPEA) the composition is skewed to basic and acidic residues. The span at 126 to 144 (NDDDDDVDLFGSDSEEEDG) shows a compositional bias: acidic residues. Phosphoserine is present on residues Ser-137 and Ser-139.

It belongs to the EF-1-beta/EF-1-delta family. As to quaternary structure, EF-1 is composed of 4 subunits: alpha, beta, delta, and gamma.

In terms of biological role, EF-1-beta and EF-1-delta stimulate the exchange of GDP bound to EF-1-alpha to GTP. The polypeptide is Probable elongation factor 1-delta (eEF1delta) (Drosophila melanogaster (Fruit fly)).